A 674-amino-acid polypeptide reads, in one-letter code: DNA ligase (674 aa).

Residues 34–38, 83–84, and Glu-117 each bind NAD(+); these read DFEFD and SL. The active-site N6-AMP-lysine intermediate is Lys-119. Arg-140, Glu-184, Lys-297, and Lys-321 together coordinate NAD(+). Residues Cys-415, Cys-418, Cys-433, and Cys-439 each coordinate Zn(2+). In terms of domain architecture, BRCT spans 598–674; sequence LVNNNFEGQS…IDEDEFERML (77 aa).

This sequence belongs to the NAD-dependent DNA ligase family. LigA subfamily. Requires Mg(2+) as cofactor. Mn(2+) is required as a cofactor.

It catalyses the reaction NAD(+) + (deoxyribonucleotide)n-3'-hydroxyl + 5'-phospho-(deoxyribonucleotide)m = (deoxyribonucleotide)n+m + AMP + beta-nicotinamide D-nucleotide.. DNA ligase that catalyzes the formation of phosphodiester linkages between 5'-phosphoryl and 3'-hydroxyl groups in double-stranded DNA using NAD as a coenzyme and as the energy source for the reaction. It is essential for DNA replication and repair of damaged DNA. The chain is DNA ligase from Chlorobaculum tepidum (strain ATCC 49652 / DSM 12025 / NBRC 103806 / TLS) (Chlorobium tepidum).